We begin with the raw amino-acid sequence, 686 residues long: L-type lectin-domain containing receptor kinase VII.1 (686 aa).

The N-terminal stretch at 1–20 (MKALLFLLTLFLILPNPISA) is a signal peptide. A legume-lectin like region spans residues 21-256 (IDFIFNGFND…SHKILAWSFS (236 aa)). Topologically, residues 21–286 (IDFIFNGFND…PKDSIVKAKW (266 aa)) are extracellular. N29, N34, N52, N64, N111, N123, N168, N203, N224, and N259 each carry an N-linked (GlcNAc...) asparagine glycan. A helical membrane pass occupies residues 287-307 (FVFVLVLICFLVVALVGLVLF). Over 308-686 (AVVRKRLERA…SWNSSILEGR (379 aa)) the chain is Cytoplasmic. Positions 347-628 (FDEKNVIGIG…VFEGDKAEIF (282 aa)) constitute a Protein kinase domain. Residues 353–361 (IGIGGNGKV) and K376 each bind ATP. Catalysis depends on D475, which acts as the Proton acceptor.

It in the C-terminal section; belongs to the protein kinase superfamily. Ser/Thr protein kinase family. This sequence in the N-terminal section; belongs to the leguminous lectin family.

It is found in the cell membrane. The enzyme catalyses L-seryl-[protein] + ATP = O-phospho-L-seryl-[protein] + ADP + H(+). It carries out the reaction L-threonyl-[protein] + ATP = O-phospho-L-threonyl-[protein] + ADP + H(+). The sequence is that of L-type lectin-domain containing receptor kinase VII.1 (LECRK71) from Arabidopsis thaliana (Mouse-ear cress).